A 601-amino-acid chain; its full sequence is UBA domain-containing protein 3 (601 aa).

Residues 7–129 (ETAIRELVQS…LFLDENHSTN (123 aa)) form the Arf-GAP domain. Disordered stretches follow at residues 123–158 (DENH…KSRY) and 289–310 (EPNQ…SSMG). Residues 139–156 (TKSSSQSSPMASTSTSKS) are compositionally biased toward low complexity. A UBA domain is found at 157 to 197 (RYADSLSTLHDMGFSDDSVNTHALEETNGDVTRAIEKIVQH).

The sequence is that of UBA domain-containing protein 3 (ucp3) from Schizosaccharomyces pombe (strain 972 / ATCC 24843) (Fission yeast).